Reading from the N-terminus, the 205-residue chain is NADH-quinone oxidoreductase subunit J (205 aa).

A run of 5 helical transmembrane segments spans residues 1–21 (MPIF…CVVL), 26–46 (VYSV…MILL), 54–74 (LLIV…IMML), 89–109 (LSLS…TVIL), and 142–162 (FMLP…SCIT).

The protein belongs to the complex I subunit 6 family.

The protein resides in the cell membrane. The enzyme catalyses a quinone + NADH + 5 H(+)(in) = a quinol + NAD(+) + 4 H(+)(out). Its function is as follows. NDH-1 shuttles electrons from NADH, via FMN and iron-sulfur (Fe-S) centers, to quinones in the respiratory chain. Couples the redox reaction to proton translocation (for every two electrons transferred, four hydrogen ions are translocated across the cytoplasmic membrane), and thus conserves the redox energy in a proton gradient. In Rickettsia typhi (strain ATCC VR-144 / Wilmington), this protein is NADH-quinone oxidoreductase subunit J (nuoJ).